Reading from the N-terminus, the 266-residue chain is Glioma pathogenesis-related protein 1 (266 aa).

An N-terminal signal peptide occupies residues 1-21 (MRVTLATIAWMVSFVSNYSHT). The SCP domain occupies 38-175 (VRIHNKFRSE…SNGAHFICNY (138 aa)). A helical membrane pass occupies residues 233 to 255 (YTSLFLIVNSVILILSVIITILV).

This sequence belongs to the CRISP family. According to PubMed:8973356, it is ubiquitously expressed with high levels in lung and kidney and low levels in heart and liver. Highly expressed in cell lines derived from nervous system tumors arising from glia, low or absent in non-glial-derived nervous system tumor cell lines. Also found in fetal kidney. According to PubMed:7607567 it is expressed only in brain tumor glioblastoma multiforme/astrocytoma and not in other nervous system tumors or normal fetal or adult tissues.

Its subcellular location is the membrane. The sequence is that of Glioma pathogenesis-related protein 1 (GLIPR1) from Homo sapiens (Human).